The following is a 946-amino-acid chain: Inter-alpha-trypsin inhibitor heavy chain H2 (946 aa).

Residues 1–18 form the signal peptide; it reads MKRLTCFFICFFLSEVSG. Residues 19–54 constitute a propeptide that is removed on maturation; it reads FEIPINGLSEFVDYEDLVELAPGKFQLVAENRRYQR. A VIT domain is found at 56-185; that stretch reads LPGESEEMME…KVQFELHYQE (130 aa). Residue Ser-60 is modified to Phosphoserine; by FAM20C. Residue Asn-118 is glycosylated (N-linked (GlcNAc...) (complex) asparagine). The cysteines at positions 261 and 264 are disulfide-linked. 2 positions are modified to 4-carboxyglutamate: Glu-282 and Glu-283. Residues 308 to 468 form the VWFA domain; that stretch reads PKNILFVIDV…YDFLKRLSNE (161 aa). Asn-445 is a glycosylation site (N-linked (GlcNAc...) asparagine). At Ser-466 the chain carries Phosphoserine; by FAM20C. A disulfide bridge connects residues Cys-650 and Cys-651. The segment at 665 to 679 is O-glycosylated at three sites; it reads STPSWANPSPTPVIS. Residue Thr-666 is glycosylated (O-linked (GalNAc...) threonine; partial). The O-linked (GalNAc...) serine glycan is linked to Ser-673. Thr-675 and Thr-691 each carry an O-linked (GalNAc...) threonine glycan. The residue at position 702 (Asp-702) is an Aspartate 1-(chondroitin 4-sulfate)-ester. A propeptide spanning residues 703 to 946 is cleaved from the precursor; the sequence is PHFIIYLPKS…PQLYSFLKRP (244 aa). A Phosphoserine; by FAM20C modification is found at Ser-886.

As to quaternary structure, I-alpha-I plasma protease inhibitors are assembled from one or two heavy chains (HC) and one light chain, bikunin. Inter-alpha-inhibitor (I-alpha-I) is composed of ITIH1/HC1, ITIH2/HC2 and bikunin. In terms of processing, heavy chains are linked to bikunin via chondroitin 4-sulfate esterified to the alpha-carboxyl of the C-terminal aspartate after propeptide cleavage. N- and O-glycosylated. O-glycosylated with core 1 or possibly core 8 glycans. Post-translationally, phosphorylated by FAM20C in the extracellular medium. In terms of tissue distribution, plasma.

The protein localises to the secreted. Functionally, may act as a carrier of hyaluronan in serum or as a binding protein between hyaluronan and other matrix protein, including those on cell surfaces in tissues to regulate the localization, synthesis and degradation of hyaluronan which are essential to cells undergoing biological processes. The chain is Inter-alpha-trypsin inhibitor heavy chain H2 (ITIH2) from Homo sapiens (Human).